Reading from the N-terminus, the 153-residue chain is Alpha-amylase inhibitor 0.28 (153 aa).

The N-terminal stretch at 1–30 (MWMKTVFWGLLVFMLVATTMAVEYGARSHN) is a signal peptide. 5 disulfides stabilise this stretch: Cys-37–Cys-84, Cys-51–Cys-72, Cys-59–Cys-112, Cys-73–Cys-128, and Cys-86–Cys-143.

It belongs to the protease inhibitor I6 (cereal trypsin/alpha-amylase inhibitor) family. In terms of assembly, monomer. In terms of processing, the disulfide bonds are essential for the inhibitor activity. In terms of tissue distribution, endosperm.

It localises to the secreted. In terms of biological role, alpha-amylase inhibitor. The polypeptide is Alpha-amylase inhibitor 0.28 (IMA1) (Triticum aestivum (Wheat)).